A 547-amino-acid polypeptide reads, in one-letter code: Chaperonin GroEL (547 aa).

ATP-binding positions include 30 to 33 (TLGP), Lys-51, 87 to 91 (DGTTT), Gly-415, and Asp-496.

This sequence belongs to the chaperonin (HSP60) family. In terms of assembly, forms a cylinder of 14 subunits composed of two heptameric rings stacked back-to-back. Interacts with the co-chaperonin GroES.

The protein resides in the cytoplasm. It catalyses the reaction ATP + H2O + a folded polypeptide = ADP + phosphate + an unfolded polypeptide.. In terms of biological role, together with its co-chaperonin GroES, plays an essential role in assisting protein folding. The GroEL-GroES system forms a nano-cage that allows encapsulation of the non-native substrate proteins and provides a physical environment optimized to promote and accelerate protein folding. This chain is Chaperonin GroEL, found in Chlorobaculum parvum (strain DSM 263 / NCIMB 8327) (Chlorobium vibrioforme subsp. thiosulfatophilum).